Reading from the N-terminus, the 346-residue chain is GTPase Obg (346 aa).

Positions methionine 1–isoleucine 158 constitute an Obg domain. The OBG-type G domain maps to alanine 159–arginine 327. Residues glycine 165–serine 172, phenylalanine 190–alanine 194, aspartate 212–glycine 215, asparagine 279–aspartate 282, and serine 308–phenylalanine 310 contribute to the GTP site. Mg(2+)-binding residues include serine 172 and threonine 192.

It belongs to the TRAFAC class OBG-HflX-like GTPase superfamily. OBG GTPase family. As to quaternary structure, monomer. It depends on Mg(2+) as a cofactor.

It localises to the cytoplasm. In terms of biological role, an essential GTPase which binds GTP, GDP and possibly (p)ppGpp with moderate affinity, with high nucleotide exchange rates and a fairly low GTP hydrolysis rate. Plays a role in control of the cell cycle, stress response, ribosome biogenesis and in those bacteria that undergo differentiation, in morphogenesis control. The polypeptide is GTPase Obg (Phenylobacterium zucineum (strain HLK1)).